The sequence spans 316 residues: 4-hydroxy-3-methylbut-2-enyl diphosphate reductase (316 aa).

Residue C12 coordinates [4Fe-4S] cluster. Residues H43 and H81 each coordinate (2E)-4-hydroxy-3-methylbut-2-enyl diphosphate. The dimethylallyl diphosphate site is built by H43 and H81. Isopentenyl diphosphate-binding residues include H43 and H81. C103 lines the [4Fe-4S] cluster pocket. Residue H131 participates in (2E)-4-hydroxy-3-methylbut-2-enyl diphosphate binding. Position 131 (H131) interacts with dimethylallyl diphosphate. H131 contributes to the isopentenyl diphosphate binding site. The active-site Proton donor is E133. T170 lines the (2E)-4-hydroxy-3-methylbut-2-enyl diphosphate pocket. A [4Fe-4S] cluster-binding site is contributed by C198. 3 residues coordinate (2E)-4-hydroxy-3-methylbut-2-enyl diphosphate: S226, N228, and S271. Dimethylallyl diphosphate contacts are provided by S226, N228, and S271. Isopentenyl diphosphate-binding residues include S226, N228, and S271.

This sequence belongs to the IspH family. Requires [4Fe-4S] cluster as cofactor.

The catalysed reaction is isopentenyl diphosphate + 2 oxidized [2Fe-2S]-[ferredoxin] + H2O = (2E)-4-hydroxy-3-methylbut-2-enyl diphosphate + 2 reduced [2Fe-2S]-[ferredoxin] + 2 H(+). It catalyses the reaction dimethylallyl diphosphate + 2 oxidized [2Fe-2S]-[ferredoxin] + H2O = (2E)-4-hydroxy-3-methylbut-2-enyl diphosphate + 2 reduced [2Fe-2S]-[ferredoxin] + 2 H(+). The protein operates within isoprenoid biosynthesis; dimethylallyl diphosphate biosynthesis; dimethylallyl diphosphate from (2E)-4-hydroxy-3-methylbutenyl diphosphate: step 1/1. Its pathway is isoprenoid biosynthesis; isopentenyl diphosphate biosynthesis via DXP pathway; isopentenyl diphosphate from 1-deoxy-D-xylulose 5-phosphate: step 6/6. Catalyzes the conversion of 1-hydroxy-2-methyl-2-(E)-butenyl 4-diphosphate (HMBPP) into a mixture of isopentenyl diphosphate (IPP) and dimethylallyl diphosphate (DMAPP). Acts in the terminal step of the DOXP/MEP pathway for isoprenoid precursor biosynthesis. This chain is 4-hydroxy-3-methylbut-2-enyl diphosphate reductase, found in Geobacillus kaustophilus (strain HTA426).